Reading from the N-terminus, the 214-residue chain is Ribosomal RNA large subunit methyltransferase E (214 aa).

S-adenosyl-L-methionine contacts are provided by Gly-68, Trp-70, Asp-88, Asp-104, and Asp-129. Lys-169 (proton acceptor) is an active-site residue.

Belongs to the class I-like SAM-binding methyltransferase superfamily. RNA methyltransferase RlmE family.

It localises to the cytoplasm. The catalysed reaction is uridine(2552) in 23S rRNA + S-adenosyl-L-methionine = 2'-O-methyluridine(2552) in 23S rRNA + S-adenosyl-L-homocysteine + H(+). Its function is as follows. Specifically methylates the uridine in position 2552 of 23S rRNA at the 2'-O position of the ribose in the fully assembled 50S ribosomal subunit. The polypeptide is Ribosomal RNA large subunit methyltransferase E (Magnetococcus marinus (strain ATCC BAA-1437 / JCM 17883 / MC-1)).